Here is a 292-residue protein sequence, read N- to C-terminus: Bis(5'-nucleosyl)-tetraphosphatase, symmetrical (292 aa).

Belongs to the Ap4A hydrolase family.

It catalyses the reaction P(1),P(4)-bis(5'-adenosyl) tetraphosphate + H2O = 2 ADP + 2 H(+). Functionally, hydrolyzes diadenosine 5',5'''-P1,P4-tetraphosphate to yield ADP. This chain is Bis(5'-nucleosyl)-tetraphosphatase, symmetrical, found in Yersinia enterocolitica serotype O:8 / biotype 1B (strain NCTC 13174 / 8081).